Consider the following 411-residue polypeptide: Histone-lysine N-methyltransferase SUV39H1-A (411 aa).

Positions 43 to 101 constitute a Chromo domain; the sequence is YEVEYLCNYKKHKGREFFLVKWKGYEESENTWEPLKNLKCPILLHQFRKDMKAALLQAN. The Pre-SET domain maps to 178–239; the sequence is VGCECEDCVS…DCANRVVQRG (62 aa). Cys-180, Cys-182, Cys-185, Cys-193, Cys-194, Cys-221, Cys-225, Cys-227, and Cys-231 together coordinate Zn(2+). The region spanning 242–365 is the SET domain; the sequence is YDLCIFKTDN…AGEELTFDYK (124 aa). S-adenosyl-L-methionine-binding positions include 253–255, Tyr-296, and 322–323; these read RGW and NH. Zn(2+) contacts are provided by Cys-325, Cys-399, Cys-401, and Cys-406. Residues 395–411 enclose the Post-SET domain; sequence VHMECKCGVRNCRKYLF.

This sequence belongs to the class V-like SAM-binding methyltransferase superfamily. Histone-lysine methyltransferase family. Suvar3-9 subfamily. Expressed ubuitiously.

The protein localises to the nucleus. The protein resides in the chromosome. Its subcellular location is the centromere. The catalysed reaction is N(6)-methyl-L-lysyl(9)-[histone H3] + S-adenosyl-L-methionine = N(6),N(6)-dimethyl-L-lysyl(9)-[histone H3] + S-adenosyl-L-homocysteine + H(+). It catalyses the reaction N(6),N(6)-dimethyl-L-lysyl(9)-[histone H3] + S-adenosyl-L-methionine = N(6),N(6),N(6)-trimethyl-L-lysyl(9)-[histone H3] + S-adenosyl-L-homocysteine + H(+). Histone methyltransferase that specifically trimethylates 'Lys-9' of histone H3 using monomethylated H3 'Lys-9' as substrate. H3 'Lys-9' trimethylation represents a specific tag for epigenetic transcriptional repression by recruiting HP1 (CBX1, CBX3 and/or CBX5) proteins to methylated histones. Mainly functions in heterochromatin regions, thereby playing a central role in the establishment of constitutive heterochromatin at pericentric and telomere regions. H3 'Lys-9' trimethylation is also required to direct DNA methylation at pericentric repeats. SUV39H1 is targeted to histone H3 via its interaction with RB1 and is involved in many processes, such as regulation of organ-specific terminal differentiation during development. This is Histone-lysine N-methyltransferase SUV39H1-A (suv39h1a) from Danio rerio (Zebrafish).